Here is a 675-residue protein sequence, read N- to C-terminus: DNA ligase (675 aa).

NAD(+) contacts are provided by residues 34–38 (DAEYD), 83–84 (SL), and Glu116. The active-site N6-AMP-lysine intermediate is the Lys118. NAD(+)-binding residues include Arg139, Glu176, Lys293, and Lys317. The Zn(2+) site is built by Cys411, Cys414, Cys429, and Cys435. In terms of domain architecture, BRCT spans 594–675 (AGENPFKGKT…FLAIVNAYKR (82 aa)).

Belongs to the NAD-dependent DNA ligase family. LigA subfamily. The cofactor is Mg(2+). Mn(2+) is required as a cofactor.

The enzyme catalyses NAD(+) + (deoxyribonucleotide)n-3'-hydroxyl + 5'-phospho-(deoxyribonucleotide)m = (deoxyribonucleotide)n+m + AMP + beta-nicotinamide D-nucleotide.. DNA ligase that catalyzes the formation of phosphodiester linkages between 5'-phosphoryl and 3'-hydroxyl groups in double-stranded DNA using NAD as a coenzyme and as the energy source for the reaction. It is essential for DNA replication and repair of damaged DNA. This is DNA ligase from Mannheimia succiniciproducens (strain KCTC 0769BP / MBEL55E).